A 650-amino-acid polypeptide reads, in one-letter code: Amyloid beta precursor like protein 1 (650 aa).

An N-terminal signal peptide occupies residues Met-1–Gly-38. At Ser-39–Glu-580 the chain is on the extracellular side. The segment at Ala-50–Val-146 is GFLD subdomain. One can recognise an E1 domain in the interval Ala-50–Pro-212. 6 cysteine pairs are disulfide-bonded: Cys-60-Cys-84, Cys-95-Cys-140, Cys-120-Cys-128, Cys-156-Cys-210, Cys-167-Cys-197, and Cys-181-Cys-209. Positions Glu-154–Pro-212 are cuBD subdomain. His-174 serves as a coordination point for Cu(2+). Zn(2+) is bound by residues Glu-206, Cys-209, and Cys-210. A disordered region spans residues Gly-214 to Thr-287. An O-linked (GalNAc...) threonine glycan is attached at Thr-215. Ser-227 carries O-linked (GalNAc...) serine glycosylation. Residue Thr-228 is glycosylated (O-linked (GalNAc...) threonine). An O-glycosylated at three sites region spans residues Thr-285 to Ser-305. The E2 domain maps to Gly-293–Leu-484. Heparin-binding regions lie at residues Phe-310 to Leu-342 and Leu-410 to Lys-441. N-linked (GlcNAc...) asparagine glycosylation is present at Asn-337. The collagen-binding stretch occupies residues Ala-442–Arg-459. Asn-461 carries an N-linked (GlcNAc...) asparagine glycan. Positions Pro-492–Tyr-546 are disordered. 2 stretches are compositionally biased toward basic and acidic residues: residues Ser-504–Thr-519 and Ser-534–Tyr-546. Asn-551 is a glycosylation site (N-linked (GlcNAc...) asparagine). His-561 contacts Cu(2+). His-561 lines the Zn(2+) pocket. A helical transmembrane segment spans residues Ala-581–Leu-603. A Basolateral sorting signal motif is present at residues Arg-604–Gly-615. At Arg-604–Pro-650 the chain is on the cytoplasmic side. Residues Glu-632 to Arg-649 are interaction with DAB1. The segment at His-636–Pro-650 is interaction with DAB2. Positions Asn-640–Tyr-643 match the Clathrin-binding motif. The short motif at Asn-640–Tyr-643 is the NPXY motif; contains endocytosis signal element.

Belongs to the APP family. In terms of assembly, monomer and homodimer. Heparin binding promotes homodimerization. Binds, via its C-terminus, to the PID domain of several cytoplasmic proteins, including APBB and APBA family members, MAPK8IP1 and DAB1. Binding to Dab1 inhibits its serine phosphorylation. Interacts with CPEB1. Interacts (via NPXY motif) with DAB2 (via PID domain); the interaction is impaired by tyrosine phosphorylation of the NPXY motif. Interacts (via NPXY motif) with DAB1. In terms of processing, proteolytically cleaved by caspases during neuronal apoptosis. Cleaved, in vitro, at Asp-620 by caspase-3. Post-translationally, N- and O-glycosylated. O-glycosylation with core 1 or possibly core 8 glycans. Glycosylation on Ser-227 is the preferred site to Thr-228. Expressed in the cerebral cortex where it is localized to the postsynaptic density (PSD).

Its subcellular location is the cell membrane. It is found in the cytoplasm. Its function is as follows. May play a role in postsynaptic function. The C-terminal gamma-secretase processed fragment, ALID1, activates transcription activation through APBB1 (Fe65) binding. Couples to JIP signal transduction through C-terminal binding. May interact with cellular G-protein signaling pathways. Can regulate neurite outgrowth through binding to components of the extracellular matrix such as heparin and collagen I. Functionally, the gamma-CTF peptide, C30, is a potent enhancer of neuronal apoptosis. The polypeptide is Amyloid beta precursor like protein 1 (APLP1) (Homo sapiens (Human)).